The sequence spans 616 residues: Dihydroxy-acid dehydratase (616 aa).

Mg(2+) is bound at residue Asp-81. Cys-122 contacts [2Fe-2S] cluster. 2 residues coordinate Mg(2+): Asp-123 and Lys-124. Residue Lys-124 is modified to N6-carboxylysine. [2Fe-2S] cluster is bound at residue Cys-195. A Mg(2+)-binding site is contributed by Glu-491. Residue Ser-517 is the Proton acceptor of the active site.

This sequence belongs to the IlvD/Edd family. In terms of assembly, homodimer. Requires [2Fe-2S] cluster as cofactor. Mg(2+) serves as cofactor.

The catalysed reaction is (2R)-2,3-dihydroxy-3-methylbutanoate = 3-methyl-2-oxobutanoate + H2O. It carries out the reaction (2R,3R)-2,3-dihydroxy-3-methylpentanoate = (S)-3-methyl-2-oxopentanoate + H2O. Its pathway is amino-acid biosynthesis; L-isoleucine biosynthesis; L-isoleucine from 2-oxobutanoate: step 3/4. It participates in amino-acid biosynthesis; L-valine biosynthesis; L-valine from pyruvate: step 3/4. Functions in the biosynthesis of branched-chain amino acids. Catalyzes the dehydration of (2R,3R)-2,3-dihydroxy-3-methylpentanoate (2,3-dihydroxy-3-methylvalerate) into 2-oxo-3-methylpentanoate (2-oxo-3-methylvalerate) and of (2R)-2,3-dihydroxy-3-methylbutanoate (2,3-dihydroxyisovalerate) into 2-oxo-3-methylbutanoate (2-oxoisovalerate), the penultimate precursor to L-isoleucine and L-valine, respectively. This is Dihydroxy-acid dehydratase from Edwardsiella ictaluri (strain 93-146).